A 307-amino-acid chain; its full sequence is Mitochondrial 2-oxodicarboxylate carrier 2 (307 aa).

6 helical membrane passes run 10–30 (LPFI…LTVM), 76–95 (SRLY…KRAT), 122–142 (IAAG…FELI), 171–191 (GLYK…GGYF), 215–235 (LIAG…FDVV), and 280–300 (CRLA…MNFF). 3 Solcar repeats span residues 10-106 (LPFI…YQKI), 116-200 (TTQK…VRNS), and 209-299 (QKTR…MMNF).

Belongs to the mitochondrial carrier (TC 2.A.29) family.

The protein resides in the mitochondrion inner membrane. Functionally, transports C5-C7 oxodicarboxylates across the inner membranes of mitochondria. Can transport 2-oxoadipate, 2-oxoglutarate, adipate, glutarate, 2-oxopimelate, oxaloacetate, citrate and malate. The main physiological role is probably to supply 2-oxoadipate and 2-oxoglutarate from the mitochondrial matrix to the cytosol where they are used in the biosynthesis of lysine and glutamate, respectively, and in lysine catabolism. This Saccharomyces cerevisiae (strain ATCC 204508 / S288c) (Baker's yeast) protein is Mitochondrial 2-oxodicarboxylate carrier 2 (ODC2).